We begin with the raw amino-acid sequence, 213 residues long: Probable glutathione S-transferase DHAR1, cytosolic (213 aa).

Glutathione-binding residues include Lys-8 and Asp-19. Lys-8 and Asp-19 together coordinate L-ascorbate. The 80-residue stretch at 10–89 (AVGHPDTLGD…VIEEKYPTPS (80 aa)) folds into the GST N-terminal domain. Cys-20 (nucleophile) is an active-site residue. Residues Lys-47, Val-60, Ser-74, His-160, and Trp-207 each contribute to the glutathione site. The GST C-terminal domain maps to 73-213 (DSDVITQVIE…IAGWAPKVNA (141 aa)). Lys-210 is a binding site for L-ascorbate.

It belongs to the GST superfamily. DHAR family. Monomer.

Its subcellular location is the cytoplasm. The protein localises to the cytosol. The catalysed reaction is RX + glutathione = an S-substituted glutathione + a halide anion + H(+). The enzyme catalyses L-dehydroascorbate + 2 glutathione = glutathione disulfide + L-ascorbate. Its function is as follows. Involved in ascorbate homeostasis. Maintains redox pools of ascorbate by recycling dihydroascorbate (DHA) to ascorbate. Involved in scavenging reactive oxygen species (ROS) under oxidative stresses. Possesses dehydroascorbate reductase (DHAR) activity in vitro. May function via a ping-pong reaction mechanism with an electron transfer at the active site. Possesses chaperone-like activity in vitro. This Oryza sativa subsp. japonica (Rice) protein is Probable glutathione S-transferase DHAR1, cytosolic.